Consider the following 213-residue polypeptide: Orotate phosphoribosyltransferase (213 aa).

Residue Lys-26 coordinates 5-phospho-alpha-D-ribose 1-diphosphate. An orotate-binding site is contributed by 34–35 (FF). Residues 72-73 (YK), Arg-99, Lys-100, Lys-103, His-105, and 124-132 (DDVITAGTA) contribute to the 5-phospho-alpha-D-ribose 1-diphosphate site. Thr-128 and Arg-156 together coordinate orotate.

Belongs to the purine/pyrimidine phosphoribosyltransferase family. PyrE subfamily. Homodimer. Requires Mg(2+) as cofactor.

The enzyme catalyses orotidine 5'-phosphate + diphosphate = orotate + 5-phospho-alpha-D-ribose 1-diphosphate. The protein operates within pyrimidine metabolism; UMP biosynthesis via de novo pathway; UMP from orotate: step 1/2. Its function is as follows. Catalyzes the transfer of a ribosyl phosphate group from 5-phosphoribose 1-diphosphate to orotate, leading to the formation of orotidine monophosphate (OMP). This is Orotate phosphoribosyltransferase from Salmonella choleraesuis (strain SC-B67).